A 210-amino-acid polypeptide reads, in one-letter code: tRNA (guanine-N(7)-)-methyltransferase (210 aa).

S-adenosyl-L-methionine is bound by residues E43, E68, D95, and D117. Residue D117 is part of the active site. Substrate contacts are provided by residues K121, D153, and 190 to 193 (TEYE).

This sequence belongs to the class I-like SAM-binding methyltransferase superfamily. TrmB family.

It carries out the reaction guanosine(46) in tRNA + S-adenosyl-L-methionine = N(7)-methylguanosine(46) in tRNA + S-adenosyl-L-homocysteine. Its pathway is tRNA modification; N(7)-methylguanine-tRNA biosynthesis. Functionally, catalyzes the formation of N(7)-methylguanine at position 46 (m7G46) in tRNA. The polypeptide is tRNA (guanine-N(7)-)-methyltransferase (Macrococcus caseolyticus (strain JCSC5402) (Macrococcoides caseolyticum)).